Consider the following 237-residue polypeptide: Carboxy-S-adenosyl-L-methionine synthase (237 aa).

Residues Tyr-36, Gly-61–Ser-63, Asp-86–Asn-87, Asp-112–Ile-113, Asn-127, and Arg-194 contribute to the S-adenosyl-L-methionine site.

The protein belongs to the class I-like SAM-binding methyltransferase superfamily. Cx-SAM synthase family. Homodimer.

The catalysed reaction is prephenate + S-adenosyl-L-methionine = carboxy-S-adenosyl-L-methionine + 3-phenylpyruvate + H2O. Functionally, catalyzes the conversion of S-adenosyl-L-methionine (SAM) to carboxy-S-adenosyl-L-methionine (Cx-SAM). The chain is Carboxy-S-adenosyl-L-methionine synthase from Ruthia magnifica subsp. Calyptogena magnifica.